A 394-amino-acid polypeptide reads, in one-letter code: Elongation factor Tu (394 aa).

The tr-type G domain occupies 10-204; sequence KPHVNVGTIG…HLDTYIPEPE (195 aa). Positions 19-26 are G1; it reads GHVDHGKT. 19–26 serves as a coordination point for GTP; the sequence is GHVDHGKT. Thr26 is a binding site for Mg(2+). The interval 60–64 is G2; the sequence is GITIN. The G3 stretch occupies residues 81 to 84; that stretch reads DCPG. GTP contacts are provided by residues 81-85 and 136-139; these read DCPGH and NKCD. The tract at residues 136-139 is G4; sequence NKCD. Residues 174–176 are G5; the sequence is SAL.

The protein belongs to the TRAFAC class translation factor GTPase superfamily. Classic translation factor GTPase family. EF-Tu/EF-1A subfamily. As to quaternary structure, monomer.

Its subcellular location is the cytoplasm. It carries out the reaction GTP + H2O = GDP + phosphate + H(+). Its function is as follows. GTP hydrolase that promotes the GTP-dependent binding of aminoacyl-tRNA to the A-site of ribosomes during protein biosynthesis. This is Elongation factor Tu from Klebsiella pneumoniae subsp. pneumoniae (strain ATCC 700721 / MGH 78578).